The primary structure comprises 199 residues: Peroxynitrite isomerase (199 aa).

Residues 20–26 (GVWEGSG) carry the GXWXGXG motif. Heme b contacts are provided by lysine 158 and histidine 190.

Belongs to the nitrobindin family. Homodimer. Heme b is required as a cofactor.

The catalysed reaction is peroxynitrite = nitrate. It participates in nitrogen metabolism. Heme-binding protein able to scavenge peroxynitrite and to protect free L-tyrosine against peroxynitrite-mediated nitration, by acting as a peroxynitrite isomerase that converts peroxynitrite to nitrate. Therefore, this protein likely plays a role in peroxynitrite sensing and in the detoxification of reactive nitrogen and oxygen species (RNS and ROS, respectively). Is able to bind nitric oxide (NO) in vitro, but may act as a sensor of peroxynitrite levels in vivo. This chain is Peroxynitrite isomerase, found in Clavibacter sepedonicus (Clavibacter michiganensis subsp. sepedonicus).